We begin with the raw amino-acid sequence, 509 residues long: Maturase K (509 aa).

This sequence belongs to the intron maturase 2 family. MatK subfamily.

The protein resides in the plastid. It is found in the chloroplast. Functionally, usually encoded in the trnK tRNA gene intron. Probably assists in splicing its own and other chloroplast group II introns. The chain is Maturase K from Nicotiana glutinosa (Tobacco).